The following is a 426-amino-acid chain: MNNLKNLRGTVDLLPDQLIKWQNVEKIVLEQLARASIKEIRTPILEMTELFIRGIGEGTDVVSKEMYTFLDRGERSCTLRPEGTASVARALIQNGISSNPFQKLWYMGPMFRYERPQAGRQRQFHQLGVEFIGYESVRSDVEIIALAWDILGKLGIKELNLEINSLGDIDDRLNFQKSFLKWLEKNKDSLDLDSQNRINKNPLRILDSKNMQTKKALENAPILFNFLSEKSHKRYSDLKKQLNVLQIPYVENFNLVRGLDYYTHTAFEITSCALGSQATVCGGGRYDNLIKQMGGPNTPAIGFAIGLERLILLAGKDLEVPRNTDIYIINQGLIAESLAMDLSRKLRNYDLLVELDLSGASFSKQFKKANKLKSKSIIVIGDDEAANKEFIIRLFDHSGNANKEEVISFENDIKLEKWLKINLLSK.

This sequence belongs to the class-II aminoacyl-tRNA synthetase family. In terms of assembly, homodimer.

It localises to the cytoplasm. The enzyme catalyses tRNA(His) + L-histidine + ATP = L-histidyl-tRNA(His) + AMP + diphosphate + H(+). The chain is Histidine--tRNA ligase from Prochlorococcus marinus (strain MIT 9312).